Consider the following 196-residue polypeptide: Late protein I196L (196 aa).

Repeat copies occupy residues 28–48 (SNYL…PTTS) and 49–70 (SNYL…TTTS). The 3; approximate repeat unit spans residues 71–92 (SNYLTSAIPNIISDKEDDTPFS).

This sequence belongs to the asfivirus I196L family.

In African swine fever virus (strain Badajoz 1971 Vero-adapted) (Ba71V), this protein is Late protein I196L.